A 459-amino-acid polypeptide reads, in one-letter code: MSNRFAVILAAGKGTRMKSKLYKVLHPVCGKPMVQHVVDQVSQLGLQKLVTVVGHGAEMVQEQLGNVSEFALQAEQLGTAHAVDQAAGVLANEEGTTLVICGDTPLITAETMEALLQQHKEAGAMATVLTAYIEEPAGYGRIVRNENGHVEKIVEHKDANEKELAIKEINTGTYCFDNKALFASLSKVSNDNVQGEYYLPDVIEILKNEGHIVSAYQTEHFDETLGVNDRVALSQAEIIMKNRINRKNMVNGVTIIDPSNTYISADAIIGSDTVLHPGTIIEGNTVIGSDCEIGPHTVIRDSEIGDRTIIRQSTVHDSKLGTEVSVGPFAHIRPDSVIGDEVRVGNFVEIKKTVFGNRSKASHLSYIGDAQVGEDVNLGCGSITVNYDGKNKFKTVIGNGVFIGCNSNLVAPVTVEDGAYVAAGSTITENVPSKALSVARARQVNKEDYVDQLLNKKKS.

A pyrophosphorylase region spans residues 1-230 (MSNRFAVILA…FDETLGVNDR (230 aa)). Residues 9 to 12 (LAAG), K23, Q73, and 78 to 79 (GT) contribute to the UDP-N-acetyl-alpha-D-glucosamine site. D103 is a Mg(2+) binding site. Residues G140, E155, N170, and N228 each coordinate UDP-N-acetyl-alpha-D-glucosamine. N228 contributes to the Mg(2+) binding site. Positions 231-251 (VALSQAEIIMKNRINRKNMVN) are linker. The segment at 252–459 (GVTIIDPSNT…VDQLLNKKKS (208 aa)) is N-acetyltransferase. Positions 333 and 351 each coordinate UDP-N-acetyl-alpha-D-glucosamine. The active-site Proton acceptor is the H363. Residues Y366 and N377 each coordinate UDP-N-acetyl-alpha-D-glucosamine. Residues 386–387 (NY), A423, and R440 contribute to the acetyl-CoA site.

The protein in the N-terminal section; belongs to the N-acetylglucosamine-1-phosphate uridyltransferase family. In the C-terminal section; belongs to the transferase hexapeptide repeat family. In terms of assembly, homotrimer. It depends on Mg(2+) as a cofactor.

It localises to the cytoplasm. The enzyme catalyses alpha-D-glucosamine 1-phosphate + acetyl-CoA = N-acetyl-alpha-D-glucosamine 1-phosphate + CoA + H(+). The catalysed reaction is N-acetyl-alpha-D-glucosamine 1-phosphate + UTP + H(+) = UDP-N-acetyl-alpha-D-glucosamine + diphosphate. Its pathway is nucleotide-sugar biosynthesis; UDP-N-acetyl-alpha-D-glucosamine biosynthesis; N-acetyl-alpha-D-glucosamine 1-phosphate from alpha-D-glucosamine 6-phosphate (route II): step 2/2. It functions in the pathway nucleotide-sugar biosynthesis; UDP-N-acetyl-alpha-D-glucosamine biosynthesis; UDP-N-acetyl-alpha-D-glucosamine from N-acetyl-alpha-D-glucosamine 1-phosphate: step 1/1. The protein operates within bacterial outer membrane biogenesis; LPS lipid A biosynthesis. In terms of biological role, catalyzes the last two sequential reactions in the de novo biosynthetic pathway for UDP-N-acetylglucosamine (UDP-GlcNAc). The C-terminal domain catalyzes the transfer of acetyl group from acetyl coenzyme A to glucosamine-1-phosphate (GlcN-1-P) to produce N-acetylglucosamine-1-phosphate (GlcNAc-1-P), which is converted into UDP-GlcNAc by the transfer of uridine 5-monophosphate (from uridine 5-triphosphate), a reaction catalyzed by the N-terminal domain. The chain is Bifunctional protein GlmU from Bacillus thuringiensis subsp. konkukian (strain 97-27).